The chain runs to 525 residues: MTLPKLSSVSVSSGHVSANSHGFSILSKHPHPNNLVHSHSLSHTNAKSHLPISSTSTKENSTNKEEAESLKKNNPSSWDPSDDIKLRHLKEIKNLGWKEIAHHFPNRTPNACQFRWRRLKSGNLKSNKTAVIDINKLFGVYATGDATPSAGTPSAEEAVKEEAVEDEDITAGSSAIEDSPPDFKPLVKPKYMDRKLITQRSTSTFSDHEPQHTKPRKLFVKPRSFSHSITTNTPNVKTAQQTNLSLYNTTSAKTNKAVNSNDYENIGLVPKIIIRSRRNSFIPSTQIPHSTTKTRKNSHSVISSRRSSFNMMHSRRSSFNSHAPTEPISRRASLVVSPYMSPRRLSTSQSVHYHPQHQYYLNPIASPNCKTDHANDKITHTRTFLDMQKFANKHPWSREDDEVLLNNTKDKQNHLSPLEISIVLPNNRSELEIQQRMDYLKRKGRVSGFHTNEGCKDEEEEDDIDPLHKENGINTPSQQSQNYGMLEAKHDNPKSSELSSMTSANDIRNEQDELPGINSIFKNIF.

Residues Gly22–Asp82 are disordered. Positions Leu35–Lys47 are enriched in polar residues. The span at Ser61–Lys71 shows a compositional bias: basic and acidic residues. One can recognise an HTH myb-type domain in the interval Ala67–Leu124. Residues Trp97 to Lys120 constitute a DNA-binding region (H-T-H motif). Ser280 carries the phosphoserine modification. The disordered stretch occupies residues Pro283–Ser308. Residues His299–Ser308 show a composition bias toward low complexity. Phosphoserine occurs at positions 333, 341, and 366. The tract at residues Thr451–Glu510 is disordered. Polar residues-rich tracts occupy residues Gly472–Tyr483 and Ser495–Asp506.

It belongs to the DOT6 family. Component of the RPD3C(L) complex composed of at least ASH1, CTI6, DEP1, DOT6, PHO23, RPD3, RXT2, RXT3, SAP30, SDS3, SIN3, TOD6; UME1 and UME6.

The protein resides in the cytoplasm. It localises to the nucleus. In terms of biological role, component of the RPD3 histone deacetylase complex RPD3C(L) responsible for the deacetylation of lysine residues on the N-terminal part of the core histones (H2A, H2B, H3 and H4). Histone deacetylation gives a tag for epigenetic repression and plays an important role in transcriptional regulation, cell cycle progression and developmental events. TOD6 binds to sequences containing the core CGATG, which resembles the PAC (Polymerase A and C) motif. In Saccharomyces cerevisiae (strain ATCC 204508 / S288c) (Baker's yeast), this protein is Transcriptional regulatory protein TOD6 (TOD6).